The chain runs to 235 residues: Small ribosomal subunit protein uS3 (235 aa).

The KH type-2 domain maps to 39–107 (VRKFLNKELA…PAQINIAEVK (69 aa)). The segment at 215–235 (AQSEQQPADKPKKAPRGKGRK) is disordered.

The protein belongs to the universal ribosomal protein uS3 family. Part of the 30S ribosomal subunit. Forms a tight complex with proteins S10 and S14.

Binds the lower part of the 30S subunit head. Binds mRNA in the 70S ribosome, positioning it for translation. The protein is Small ribosomal subunit protein uS3 of Haemophilus influenzae (strain ATCC 51907 / DSM 11121 / KW20 / Rd).